The sequence spans 139 residues: Type II methyltransferase M.AquIB (139 aa).

Residues 1–135 (MDIKNVHIKN…KAVSEQLLDV (135 aa)) form the SAM-dependent MTase C5-type domain. Positions 38-58 (KTFGSTYRRLDPNQPSPTVTR) are disordered.

This sequence belongs to the class I-like SAM-binding methyltransferase superfamily. C5-methyltransferase family. As to quaternary structure, heterodimer of an alpha and a beta subunit.

The enzyme catalyses a 2'-deoxycytidine in DNA + S-adenosyl-L-methionine = a 5-methyl-2'-deoxycytidine in DNA + S-adenosyl-L-homocysteine + H(+). Its function is as follows. A methylase, recognizes the double-stranded sequence 5'-CYCGRG-3', methylates C-1 on both strands, and protects the DNA from cleavage by the AquI endonuclease. The polypeptide is Type II methyltransferase M.AquIB (aquIMB) (Picosynechococcus sp. (strain ATCC 27264 / PCC 7002 / PR-6) (Agmenellum quadruplicatum)).